A 233-amino-acid polypeptide reads, in one-letter code: tRNA (guanine-N(1)-)-methyltransferase (233 aa).

Residues G113 and 133-138 contribute to the S-adenosyl-L-methionine site; that span reads IGDYVL.

This sequence belongs to the RNA methyltransferase TrmD family. As to quaternary structure, homodimer.

It localises to the cytoplasm. The catalysed reaction is guanosine(37) in tRNA + S-adenosyl-L-methionine = N(1)-methylguanosine(37) in tRNA + S-adenosyl-L-homocysteine + H(+). Its function is as follows. Specifically methylates guanosine-37 in various tRNAs. This Ruminiclostridium cellulolyticum (strain ATCC 35319 / DSM 5812 / JCM 6584 / H10) (Clostridium cellulolyticum) protein is tRNA (guanine-N(1)-)-methyltransferase.